A 345-amino-acid polypeptide reads, in one-letter code: S-adenosylmethionine:tRNA ribosyltransferase-isomerase (345 aa).

This sequence belongs to the QueA family. In terms of assembly, monomer.

The protein resides in the cytoplasm. The catalysed reaction is 7-aminomethyl-7-carbaguanosine(34) in tRNA + S-adenosyl-L-methionine = epoxyqueuosine(34) in tRNA + adenine + L-methionine + 2 H(+). It functions in the pathway tRNA modification; tRNA-queuosine biosynthesis. Transfers and isomerizes the ribose moiety from AdoMet to the 7-aminomethyl group of 7-deazaguanine (preQ1-tRNA) to give epoxyqueuosine (oQ-tRNA). The polypeptide is S-adenosylmethionine:tRNA ribosyltransferase-isomerase (Helicobacter pylori (strain G27)).